Consider the following 174-residue polypeptide: RNA pyrophosphohydrolase (174 aa).

The Nudix hydrolase domain maps to 6-149 (GYRPNVGIIL…KRDVYLGALK (144 aa)). The Nudix box signature appears at 38–59 (GGIKPGESPETAMYRELYEEVG).

Belongs to the Nudix hydrolase family. RppH subfamily. The cofactor is a divalent metal cation.

Its function is as follows. Accelerates the degradation of transcripts by removing pyrophosphate from the 5'-end of triphosphorylated RNA, leading to a more labile monophosphorylated state that can stimulate subsequent ribonuclease cleavage. In Neisseria meningitidis serogroup A / serotype 4A (strain DSM 15465 / Z2491), this protein is RNA pyrophosphohydrolase.